The sequence spans 789 residues: Ent-kaurene synthase TSP4, chloroplastic (789 aa).

The Mg(2+) site is built by Asp540 and Asp544. The DDXXD motif signature appears at 540 to 544 (DDFFD). A helical membrane pass occupies residues 638-656 (AYVSFALGPIVLPALYLVG). Mg(2+)-binding residues include Asn684, Arg687, and Glu692.

It belongs to the terpene synthase family. It depends on Mg(2+) as a cofactor. As to expression, expressed in leaves and fruits, including trichomes.

The protein localises to the plastid. It is found in the chloroplast membrane. It catalyses the reaction ent-copalyl diphosphate = ent-kaur-16-ene + diphosphate. It functions in the pathway plant hormone biosynthesis; gibberellin biosynthesis. Functionally, involved in the biosynthesis of labdane-type diterpenoid including cleroda-dienols, and peregrinol lactones and furan derivatives, dopaminergic diterpenoids that can bind to dopamine receptors in the human pituitary gland, have probably ability to lower prolactin levels, and are used to treat menstrual cycle disorders (e.g. premenstrual syndrome and mastodynia). Terpene synthase that produces ent-kaurene from ent-copalyl diphosphate. This Vitex agnus-castus (Chaste tree) protein is Ent-kaurene synthase TSP4, chloroplastic.